The primary structure comprises 580 residues: MAEFLNDQDTRLCDNCKKEIPVFNFTIHEIHCQRNIGVCPVCKEPFPKCDMETHMATEHCQVTCKCNKKLEKRQLKKHEETECPLRLALCQHCDLELSVLKLKDHEDYCGARTELCGTCGRNVLVKDLKTHPEVCGRDVEEKRVEAAMPPNAYDESWGPDRIWIASQLRQIEALDPPMRLPRRPLRAFESDLFQSRTTNQRSMTAQFPIQNNLLEEQERQERNRSRQTPKERGEDSANLDFMLALSLQNEGQAPTLAEQDFWRVIYEADQSREGPSALNDIRGAVDETMLPCEFCEELYPEELLIDHQTSCNPSCALPPLSVGSTSPRGVEDPDAIFQKLMRESAGGQFESLMGFSSSAPVEDSVVIPCEFCGVQLEEEVLFHHQDQCDQRPATANNHVSEGIPSQDLQPRETSPELPKRRVRHQGDLSSGYMNDLKQEMAKGPTYPLPSSRPPNNTTAPPNRLSTSTSGPRPGCQPSPPRALKLNNLDSQGVRGHSRNSHNGALAPGHVPAAYPARSLYPENLVPSFPRGPSGRYGASSRSEGGRNPRVTPTAASYRSRTAKAKTPKQQGAGDAEEEEE.

A2 carries the post-translational modification N-acetylalanine. The TRAF-type zinc finger occupies I27–K103. S190 is subject to Phosphoserine. Residues T197–I209 are compositionally biased toward polar residues. The disordered stretch occupies residues T197–S236. A compositionally biased stretch (basic and acidic residues) spans E216–D235. 3 positions are modified to phosphoserine: S326, S414, and S429. The interval P392–E580 is disordered. Basic and acidic residues predominate over residues Q409–K419. A compositionally biased stretch (low complexity) spans P453 to R463. A Phosphoserine modification is found at S469.

As to quaternary structure, interacts with MAVS, TICAM1, TRAF1, TRAF2, TRAF3 and TRAF6.

Functionally, negative feedback regulator that controls excessive innate immune responses. Regulates both Toll-like receptor 4 (TLR4) and DDX58/RIG1-like helicases (RLH) pathways. May inhibit the LTR pathway by direct interaction with TRAF6 and attenuation of NF-kappa-B activation. May negatively regulate the RLH pathway downstream from MAVS and upstream of NF-kappa-B and IRF3. The sequence is that of TRAF-type zinc finger domain-containing protein 1 (TRAFD1) from Bos taurus (Bovine).